Reading from the N-terminus, the 161-residue chain is Putative 2'-deoxynucleoside 5'-phosphate N-hydrolase 1 (161 aa).

Substrate is bound by residues F27 to R33, Y42, H60, E106, and S128 to M130.

The protein belongs to the 2'-deoxynucleoside 5'-phosphate N-hydrolase 1 family. As to quaternary structure, monomer and homodimer.

It carries out the reaction a pyrimidine 2'-deoxyribonucleoside 5'-phosphate + H2O = a pyrimidine nucleobase + 2-deoxy-D-ribose 5-phosphate. It catalyses the reaction a purine 2'-deoxyribonucleoside 5'-phosphate + H2O = a purine nucleobase + 2-deoxy-D-ribose 5-phosphate. Its function is as follows. Catalyzes the cleavage of the N-glycosidic bond of deoxyribonucleoside 5'-monophosphates to yield deoxyribose 5-phosphate and a purine or pyrimidine base. The chain is Putative 2'-deoxynucleoside 5'-phosphate N-hydrolase 1 from Methanosarcina mazei (strain ATCC BAA-159 / DSM 3647 / Goe1 / Go1 / JCM 11833 / OCM 88) (Methanosarcina frisia).